A 59-amino-acid chain; its full sequence is Potassium channel toxin alpha-KTx 3.10 (59 aa).

The N-terminal stretch at 1–22 (MKVFFAVLIALFVCSMVIGIHG) is a signal peptide. Disulfide bonds link C30-C50, C36-C55, and C40-C57.

It belongs to the short scorpion toxin superfamily. Potassium channel inhibitor family. Alpha-KTx 03 subfamily. In terms of tissue distribution, expressed by the venom gland.

It localises to the secreted. Functionally, inhibits insect potassium channel. Is at least a 100-fold more potent against the Drosophila Shaker channel than towards its mammalian homologs Kv1.1/KCNA1 and Kv1.3/KCNA3. This Buthus israelis (Israeli scorpion) protein is Potassium channel toxin alpha-KTx 3.10.